Reading from the N-terminus, the 341-residue chain is Eukaryotic translation initiation factor 2 subunit 1 (341 aa).

Residues 18–89 (NELVMVRIES…DKGYIDLSKR (72 aa)) form the S1 motif domain. Residues 301 to 341 (LMEQLEVENQDGDGEEHEDDDDDDDDEEEEEKPKEKKSSRK) form a disordered region. The segment covering 303-330 (EQLEVENQDGDGEEHEDDDDDDDDEEEE) has biased composition (acidic residues). Over residues 331 to 341 (EKPKEKKSSRK) the composition is skewed to basic and acidic residues.

The protein belongs to the eIF-2-alpha family. As to quaternary structure, eukaryotic translation initiation factor 2 eIF2 is a heterotrimeric complex composed of an alpha, a beta and a gamma subunit.

The protein resides in the cytoplasm. It is found in the cytosol. EIF-2 functions in the early steps of protein synthesis by forming a ternary complex with GTP and initiator tRNA. This complex binds to a 40S ribosomal subunit, followed by mRNA binding to form a 43S pre-initiation complex. Junction of the 60S ribosomal subunit to form the 80S initiation complex is preceded by hydrolysis of the GTP bound to eIF-2 and release of an eIF-2-GDP binary complex. In order for eIF-2 to recycle and catalyze another round of initiation, the GDP bound to eIF-2 must exchange with GTP by way of a reaction catalyzed by eIF2B. The chain is Eukaryotic translation initiation factor 2 subunit 1 (eif2s1) from Dictyostelium discoideum (Social amoeba).